The following is a 182-amino-acid chain: ATP synthase subunit delta (182 aa).

This sequence belongs to the ATPase delta chain family. As to quaternary structure, F-type ATPases have 2 components, F(1) - the catalytic core - and F(0) - the membrane proton channel. F(1) has five subunits: alpha(3), beta(3), gamma(1), delta(1), epsilon(1). F(0) has three main subunits: a(1), b(2) and c(10-14). The alpha and beta chains form an alternating ring which encloses part of the gamma chain. F(1) is attached to F(0) by a central stalk formed by the gamma and epsilon chains, while a peripheral stalk is formed by the delta and b chains.

Its subcellular location is the cell inner membrane. Functionally, f(1)F(0) ATP synthase produces ATP from ADP in the presence of a proton or sodium gradient. F-type ATPases consist of two structural domains, F(1) containing the extramembraneous catalytic core and F(0) containing the membrane proton channel, linked together by a central stalk and a peripheral stalk. During catalysis, ATP synthesis in the catalytic domain of F(1) is coupled via a rotary mechanism of the central stalk subunits to proton translocation. Its function is as follows. This protein is part of the stalk that links CF(0) to CF(1). It either transmits conformational changes from CF(0) to CF(1) or is implicated in proton conduction. The sequence is that of ATP synthase subunit delta from Pseudothermotoga lettingae (strain ATCC BAA-301 / DSM 14385 / NBRC 107922 / TMO) (Thermotoga lettingae).